The following is a 254-amino-acid chain: uncharacterized protein (254 aa).

Residues V7 and N85 each contribute to the NADP(+) site. S136 acts as the Proton donor in catalysis. 4 residues coordinate NADP(+): Y150, K154, V181, and T183. Y150 functions as the Proton acceptor in the catalytic mechanism. K154 acts as the Lowers pKa of active site Tyr in catalysis.

Belongs to the short-chain dehydrogenases/reductases (SDR) family.

This is an uncharacterized protein from Saccharomyces cerevisiae (strain ATCC 204508 / S288c) (Baker's yeast).